The following is a 325-amino-acid chain: Psp operon transcriptional activator (325 aa).

The Sigma-54 factor interaction domain occupies 15-237 (FLEVLEQVSH…ELKNVVERSV (223 aa)). ATP contacts are provided by residues 36 to 43 (GERGTGKE) and 99 to 108 (ADGGTLFLDE). A DNA-binding region (H-T-H motif) is located at residues 302–321 (QKRAAELLGLTYHQFRALLK).

Forms a complex with PspA, which is composed of around 6 PspF subunits and 6 PspA subunits.

Its subcellular location is the cytoplasm. With respect to regulation, ATPase activity is inhibited by interaction with PspA. Under inducing conditions, the interaction is disrupted, allowing activation of psp transcription. Functionally, transcriptional activator for the phage shock protein (psp) operon (pspABCDE) and pspG gene. This is Psp operon transcriptional activator (pspF) from Escherichia coli (strain K12).